Consider the following 576-residue polypeptide: CTP synthase (576 aa).

One can recognise a Glutamine amidotransferase type-1 domain in the interval 305–559 (QIALVGKYTH…LGLVAAAANI (255 aa)). Residues C404, H535, and E537 each act as for GATase activity in the active site.

This sequence belongs to the CTP synthase family.

It catalyses the reaction UTP + L-glutamine + ATP + H2O = CTP + L-glutamate + ADP + phosphate + 2 H(+). It participates in pyrimidine metabolism; CTP biosynthesis via de novo pathway; CTP from UDP: step 2/2. In terms of biological role, catalyzes the ATP-dependent amination of UTP to CTP with either L-glutamine or ammonia as the source of nitrogen. This is CTP synthase (URA7) from Eremothecium gossypii (strain ATCC 10895 / CBS 109.51 / FGSC 9923 / NRRL Y-1056) (Yeast).